The chain runs to 296 residues: Protoheme IX farnesyltransferase (296 aa).

Helical transmembrane passes span Val9 to Ala29, Tyr36 to Phe56, Val75 to Ile95, Leu99 to Ile119, Val133 to Ala153, Leu163 to Phe183, Ile209 to Ala229, Leu234 to Ala254, and Phe265 to Val285.

This sequence belongs to the UbiA prenyltransferase family. Protoheme IX farnesyltransferase subfamily.

The protein localises to the cell inner membrane. It catalyses the reaction heme b + (2E,6E)-farnesyl diphosphate + H2O = Fe(II)-heme o + diphosphate. It participates in porphyrin-containing compound metabolism; heme O biosynthesis; heme O from protoheme: step 1/1. Its function is as follows. Converts heme B (protoheme IX) to heme O by substitution of the vinyl group on carbon 2 of heme B porphyrin ring with a hydroxyethyl farnesyl side group. In Yersinia pestis bv. Antiqua (strain Antiqua), this protein is Protoheme IX farnesyltransferase.